The sequence spans 298 residues: tRNA pseudouridine synthase A (298 aa).

The active-site Nucleophile is the aspartate 56. Tyrosine 125 contributes to the substrate binding site.

Belongs to the tRNA pseudouridine synthase TruA family. Homodimer.

It carries out the reaction uridine(38/39/40) in tRNA = pseudouridine(38/39/40) in tRNA. Its function is as follows. Formation of pseudouridine at positions 38, 39 and 40 in the anticodon stem and loop of transfer RNAs. This chain is tRNA pseudouridine synthase A, found in Bifidobacterium animalis subsp. lactis (strain AD011).